Here is a 344-residue protein sequence, read N- to C-terminus: uncharacterized protein (344 aa).

Helical transmembrane passes span 25-45, 68-88, 104-124, 133-153, 161-181, 224-244, 276-296, and 302-322; these read GAGW…VGAV, FVDA…ADGV, GVVP…GWNC, SACA…GVGA, GVGT…LAVV, LGAF…DAAL, VFAL…PAAL, and LVTA…LAGV.

The protein belongs to the peptidase S58 family.

Its subcellular location is the cell membrane. In terms of biological role, aminopeptidase. This is an uncharacterized protein from Mycobacterium bovis (strain ATCC BAA-935 / AF2122/97).